Reading from the N-terminus, the 353-residue chain is Phospho-N-acetylmuramoyl-pentapeptide-transferase (353 aa).

10 consecutive transmembrane segments (helical) span residues 24-44 (LGFF…ILWA), 66-86 (TPTM…VLCA), 88-108 (LSNL…FVGF), 129-149 (FGML…KGLD), 160-180 (PLFE…FLST), 192-212 (GLAS…VYVA), 229-249 (VGEL…FLWY), 256-276 (VFMG…NAIV), 281-301 (ILLV…ILQV), and 330-350 (KVIV…LLSL).

The protein belongs to the glycosyltransferase 4 family. MraY subfamily. Mg(2+) serves as cofactor.

It is found in the cell inner membrane. It carries out the reaction UDP-N-acetyl-alpha-D-muramoyl-L-alanyl-gamma-D-glutamyl-meso-2,6-diaminopimeloyl-D-alanyl-D-alanine + di-trans,octa-cis-undecaprenyl phosphate = di-trans,octa-cis-undecaprenyl diphospho-N-acetyl-alpha-D-muramoyl-L-alanyl-D-glutamyl-meso-2,6-diaminopimeloyl-D-alanyl-D-alanine + UMP. Its pathway is cell wall biogenesis; peptidoglycan biosynthesis. Functionally, catalyzes the initial step of the lipid cycle reactions in the biosynthesis of the cell wall peptidoglycan: transfers peptidoglycan precursor phospho-MurNAc-pentapeptide from UDP-MurNAc-pentapeptide onto the lipid carrier undecaprenyl phosphate, yielding undecaprenyl-pyrophosphoryl-MurNAc-pentapeptide, known as lipid I. This chain is Phospho-N-acetylmuramoyl-pentapeptide-transferase, found in Helicobacter pylori (strain J99 / ATCC 700824) (Campylobacter pylori J99).